The primary structure comprises 61 residues: Small ribosomal subunit protein uS14 (61 aa).

Zn(2+) contacts are provided by Cys-24, Cys-27, Cys-40, and Cys-43.

This sequence belongs to the universal ribosomal protein uS14 family. Zinc-binding uS14 subfamily. Part of the 30S ribosomal subunit. Contacts proteins S3 and S10. The cofactor is Zn(2+).

In terms of biological role, binds 16S rRNA, required for the assembly of 30S particles and may also be responsible for determining the conformation of the 16S rRNA at the A site. This chain is Small ribosomal subunit protein uS14, found in Borreliella burgdorferi (strain ATCC 35210 / DSM 4680 / CIP 102532 / B31) (Borrelia burgdorferi).